The sequence spans 118 residues: NADH-ubiquinone oxidoreductase chain 3 (118 aa).

Helical transmembrane passes span 6–26 (IFVYLVISLLLSLILIGVSFL), 62–82 (LVSILFIIFDLEVTFLFPWAV), and 87–107 (IGLFGFWSMMVFLFILTIGFV).

This sequence belongs to the complex I subunit 3 family.

It is found in the mitochondrion membrane. The enzyme catalyses a ubiquinone + NADH + 5 H(+)(in) = a ubiquinol + NAD(+) + 4 H(+)(out). Its function is as follows. Core subunit of the mitochondrial membrane respiratory chain NADH dehydrogenase (Complex I) that is believed to belong to the minimal assembly required for catalysis. Complex I functions in the transfer of electrons from NADH to the respiratory chain. The immediate electron acceptor for the enzyme is believed to be ubiquinone. This Marchantia polymorpha (Common liverwort) protein is NADH-ubiquinone oxidoreductase chain 3 (ND3).